Consider the following 65-residue polypeptide: Large ribosomal subunit protein bL33c (65 aa).

It belongs to the bacterial ribosomal protein bL33 family.

It localises to the plastid. The protein resides in the chloroplast. In Staurastrum punctulatum (Green alga), this protein is Large ribosomal subunit protein bL33c.